The chain runs to 198 residues: Large ribosomal subunit protein bL25 (198 aa).

The protein belongs to the bacterial ribosomal protein bL25 family. CTC subfamily. As to quaternary structure, part of the 50S ribosomal subunit; part of the 5S rRNA/L5/L18/L25 subcomplex. Contacts the 5S rRNA. Binds to the 5S rRNA independently of L5 and L18.

Functionally, this is one of the proteins that binds to the 5S RNA in the ribosome where it forms part of the central protuberance. The protein is Large ribosomal subunit protein bL25 of Chlorobium phaeobacteroides (strain DSM 266 / SMG 266 / 2430).